Consider the following 281-residue polypeptide: Putative phosphoenolpyruvate synthase regulatory protein (281 aa).

161-168 (GVSRSGKT) contributes to the ADP binding site.

Belongs to the pyruvate, phosphate/water dikinase regulatory protein family. PSRP subfamily.

The enzyme catalyses [pyruvate, water dikinase] + ADP = [pyruvate, water dikinase]-phosphate + AMP + H(+). It carries out the reaction [pyruvate, water dikinase]-phosphate + phosphate + H(+) = [pyruvate, water dikinase] + diphosphate. Bifunctional serine/threonine kinase and phosphorylase involved in the regulation of the phosphoenolpyruvate synthase (PEPS) by catalyzing its phosphorylation/dephosphorylation. This Herminiimonas arsenicoxydans protein is Putative phosphoenolpyruvate synthase regulatory protein.